Consider the following 555-residue polypeptide: 2-isopropylmalate synthase (555 aa).

One can recognise a Pyruvate carboxyltransferase domain in the interval 30–303 (PIWCSVDLRD…DPGLDCTDIN (274 aa)). Residues D39, H242, H244, and N278 each contribute to the Mg(2+) site. Residues 437-555 (QPDARIKFVD…VSAANRVIAK (119 aa)) form a regulatory domain region.

It belongs to the alpha-IPM synthase/homocitrate synthase family. LeuA type 2 subfamily. In terms of assembly, homodimer. Mg(2+) is required as a cofactor.

The protein resides in the cytoplasm. It carries out the reaction 3-methyl-2-oxobutanoate + acetyl-CoA + H2O = (2S)-2-isopropylmalate + CoA + H(+). Its pathway is amino-acid biosynthesis; L-leucine biosynthesis; L-leucine from 3-methyl-2-oxobutanoate: step 1/4. Functionally, catalyzes the condensation of the acetyl group of acetyl-CoA with 3-methyl-2-oxobutanoate (2-ketoisovalerate) to form 3-carboxy-3-hydroxy-4-methylpentanoate (2-isopropylmalate). The protein is 2-isopropylmalate synthase of Brucella suis biovar 1 (strain 1330).